Reading from the N-terminus, the 544-residue chain is Membrane protein insertase YidC (544 aa).

Residues 6–26 (NLLLIALLFVTFMLWQAWETD) traverse the membrane as a helical segment. Residues 112–132 (SGLTGKNGPDNPANGPRPLFT) are disordered. 4 helical membrane passes run 343–363 (KFLH…TFIV), 418–438 (LGGC…YYML), 456–476 (LSAQ…MFFI), and 497–517 (PVIF…YYIV).

The protein belongs to the OXA1/ALB3/YidC family. Type 1 subfamily. Interacts with the Sec translocase complex via SecD. Specifically interacts with transmembrane segments of nascent integral membrane proteins during membrane integration.

The protein localises to the cell inner membrane. Its function is as follows. Required for the insertion and/or proper folding and/or complex formation of integral membrane proteins into the membrane. Involved in integration of membrane proteins that insert both dependently and independently of the Sec translocase complex, as well as at least some lipoproteins. Aids folding of multispanning membrane proteins. The chain is Membrane protein insertase YidC from Pectobacterium carotovorum subsp. carotovorum (strain PC1).